The chain runs to 308 residues: tRNA dimethylallyltransferase (308 aa).

14–21 (GPTASGKS) is an ATP binding site. 16–21 (TASGKS) is a binding site for substrate. An interaction with substrate tRNA region spans residues 39–42 (DSMQ).

Belongs to the IPP transferase family. Monomer. The cofactor is Mg(2+).

The catalysed reaction is adenosine(37) in tRNA + dimethylallyl diphosphate = N(6)-dimethylallyladenosine(37) in tRNA + diphosphate. Functionally, catalyzes the transfer of a dimethylallyl group onto the adenine at position 37 in tRNAs that read codons beginning with uridine, leading to the formation of N6-(dimethylallyl)adenosine (i(6)A). The chain is tRNA dimethylallyltransferase from Bradyrhizobium sp. (strain ORS 278).